Here is a 188-residue protein sequence, read N- to C-terminus: NAD(P)H-quinone oxidoreductase subunit 6, chloroplastic (188 aa).

5 helical membrane-spanning segments follow: residues 10-30 (GILLIIELGILLGSMGVILLN), 32-52 (IVQSAFSLGLTFISISLLYLV), 61-81 (AQVLIYVGAINVLIVFSVMLI), 97-117 (GNNITLIVCTSLFLFLVSIIL), and 153-173 (FLLPFELLSVLLLVALVGAIT).

It belongs to the complex I subunit 6 family. As to quaternary structure, NDH is composed of at least 16 different subunits, 5 of which are encoded in the nucleus.

Its subcellular location is the plastid. It is found in the chloroplast thylakoid membrane. The enzyme catalyses a plastoquinone + NADH + (n+1) H(+)(in) = a plastoquinol + NAD(+) + n H(+)(out). The catalysed reaction is a plastoquinone + NADPH + (n+1) H(+)(in) = a plastoquinol + NADP(+) + n H(+)(out). Functionally, NDH shuttles electrons from NAD(P)H:plastoquinone, via FMN and iron-sulfur (Fe-S) centers, to quinones in the photosynthetic chain and possibly in a chloroplast respiratory chain. The immediate electron acceptor for the enzyme in this species is believed to be plastoquinone. Couples the redox reaction to proton translocation, and thus conserves the redox energy in a proton gradient. The polypeptide is NAD(P)H-quinone oxidoreductase subunit 6, chloroplastic (ndhG) (Psilotum nudum (Whisk fern)).